Reading from the N-terminus, the 554-residue chain is MGSSTNNTQSKATPSVLENEVNSSKSSVVSSTSSAKGLLRETTNHGTMETSSVQISESESRPSKMVLVLTLASSISGFMFGYDTGYISSALVQIGTDLSNKILTSGEKEFITSATSLGALLGAVVGGVLANLIGRRRVLLGSNIIFVVGTIIQLAARTVWTMIAGRFVLGWGVGIASLIAPLMISELAPAKYRGRLIVTNVIFITGGQLIAYFINWGLTRVSHGWRVSVGLCMVPPVLQFVLFWFLPDTPRFYVMNGNFEKARQVLRKVHVDPSDEFVNATIDEMIASDSTVPGNGPLQKAWKSIKIIHTTPGNFRALILACGLQGIQQFTGFNSLMYFSATIFETIGFHNATAVSIIIAATNFVFTGIAICIIDKVGRRRILLVGMPCMCISLIVCAVAFHYLNVDFSTGTVVSRGINGWGIVVIIGMILYVASYAIGIGNAAWVGVELFSDVNVRSIGAMYAACTNWAGSLVIASTFLTMLENITPTGTFSFFAGLCFIAFFFVYFLLPDTAGLELEETTDFLSNGFNVKQAAQLSKERKKHSKFAKSKPTV.

The segment covering methionine 1–threonine 13 has biased composition (polar residues). The interval methionine 1–glutamate 57 is disordered. Residues asparagine 6 and asparagine 22 are each glycosylated (N-linked (GlcNAc...) asparagine). A compositionally biased stretch (low complexity) spans serine 15–serine 34. Residues asparagine 44–glutamate 57 are compositionally biased toward polar residues. 6 consecutive transmembrane segments (helical) span residues methionine 65–glycine 85, phenylalanine 110–alanine 130, isoleucine 144–alanine 164, phenylalanine 167–leucine 187, leucine 196–tryptophan 216, and valine 227–proline 247. N-linked (GlcNAc...) asparagine glycosylation occurs at asparagine 279. Residues glycine 313–glycine 332 traverse the membrane as a helical segment. Asparagine 351 carries N-linked (GlcNAc...) asparagine glycosylation. 5 consecutive transmembrane segments (helical) span residues alanine 354–isoleucine 374, isoleucine 382–histidine 402, glycine 420–isoleucine 440, isoleucine 459–phenylalanine 479, and glycine 490–leucine 510.

Belongs to the major facilitator superfamily. Sugar transporter (TC 2.A.1.1) family.

It is found in the cell membrane. The enzyme catalyses myo-inositol(out) + H(+)(out) = myo-inositol(in) + H(+)(in). In terms of biological role, major transporter for myo-inositol. In Candida albicans (strain SC5314 / ATCC MYA-2876) (Yeast), this protein is Myo-inositol transporter 1.